The following is a 172-amino-acid chain: Large ribosomal subunit protein uL10 (172 aa).

This sequence belongs to the universal ribosomal protein uL10 family. In terms of assembly, part of the ribosomal stalk of the 50S ribosomal subunit. The N-terminus interacts with L11 and the large rRNA to form the base of the stalk. The C-terminus forms an elongated spine to which L12 dimers bind in a sequential fashion forming a multimeric L10(L12)X complex.

Its function is as follows. Forms part of the ribosomal stalk, playing a central role in the interaction of the ribosome with GTP-bound translation factors. This Beijerinckia indica subsp. indica (strain ATCC 9039 / DSM 1715 / NCIMB 8712) protein is Large ribosomal subunit protein uL10.